The chain runs to 132 residues: Arsenate reductase 1 (132 aa).

Active-site nucleophile residues include Cys10, Cys82, and Cys89. 2 disulfide bridges follow: Cys10-Cys82 and Cys82-Cys89.

The protein belongs to the low molecular weight phosphotyrosine protein phosphatase family. Thioredoxin-coupled ArsC subfamily.

Its subcellular location is the cytoplasm. The catalysed reaction is arsenate + [thioredoxin]-dithiol + H(+) = arsenite + [thioredoxin]-disulfide + H2O. Its function is as follows. Catalyzes the reduction of arsenate [As(V)] to arsenite [As(III)]. The polypeptide is Arsenate reductase 1 (Staphylococcus epidermidis (strain ATCC 35984 / DSM 28319 / BCRC 17069 / CCUG 31568 / BM 3577 / RP62A)).